The chain runs to 111 residues: Translation initiation factor 1A 1 (111 aa).

The tract at residues 1–28 (MTLADLKKPTSRASPSTEETVTRVRTPR) is disordered. The 75-residue stretch at 22–96 (TRVRTPRREN…EKADVIWKYT (75 aa)) folds into the S1-like domain.

It belongs to the eIF-1A family.

Its function is as follows. Seems to be required for maximal rate of protein biosynthesis. Enhances ribosome dissociation into subunits and stabilizes the binding of the initiator Met-tRNA(I) to 40 S ribosomal subunits. In Methanosarcina mazei (strain ATCC BAA-159 / DSM 3647 / Goe1 / Go1 / JCM 11833 / OCM 88) (Methanosarcina frisia), this protein is Translation initiation factor 1A 1 (eIF1A1).